Here is a 434-residue protein sequence, read N- to C-terminus: Trigger factor 2 (434 aa).

A PPIase FKBP-type domain is found at 164-247 (GDTVTVDYDC…VKKVERIEIL (84 aa)).

Belongs to the FKBP-type PPIase family. Tig subfamily.

It localises to the cytoplasm. It catalyses the reaction [protein]-peptidylproline (omega=180) = [protein]-peptidylproline (omega=0). Its function is as follows. Involved in protein export. Acts as a chaperone by maintaining the newly synthesized protein in an open conformation. Functions as a peptidyl-prolyl cis-trans isomerase. The sequence is that of Trigger factor 2 from Desulfitobacterium hafniense (strain Y51).